The chain runs to 208 residues: Large ribosomal subunit protein uL3 (208 aa).

A disordered region spans residues 134 to 153 (SKFHREAGSTGQCTSPGRTF).

Belongs to the universal ribosomal protein uL3 family. As to quaternary structure, part of the 50S ribosomal subunit. Forms a cluster with proteins L14 and L19.

Functionally, one of the primary rRNA binding proteins, it binds directly near the 3'-end of the 23S rRNA, where it nucleates assembly of the 50S subunit. This is Large ribosomal subunit protein uL3 from Treponema pallidum (strain Nichols).